Here is a 184-residue protein sequence, read N- to C-terminus: Intraflagellar transport protein 22 homolog (184 aa).

Residues 10–17, 62–66, and 122–125 each bind GTP; these read GPTESGKT, DCGGD, and KKPG.

Belongs to the small GTPase superfamily. Rab family.

The protein is Intraflagellar transport protein 22 homolog (ift22) of Xenopus tropicalis (Western clawed frog).